The primary structure comprises 1067 residues: Probable isoleucine--tRNA ligase, cytoplasmic (1067 aa).

Residues 47 to 57 (PFATGLPHYGH) carry the 'HIGH' region motif. Positions 604 to 608 (KMSKR) match the 'KMSKS' region motif. Position 607 (Lys607) interacts with ATP.

This sequence belongs to the class-I aminoacyl-tRNA synthetase family.

Its subcellular location is the cytoplasm. The catalysed reaction is tRNA(Ile) + L-isoleucine + ATP = L-isoleucyl-tRNA(Ile) + AMP + diphosphate. This chain is Probable isoleucine--tRNA ligase, cytoplasmic (ileS), found in Dictyostelium discoideum (Social amoeba).